A 68-amino-acid chain; its full sequence is Beta-toxin Cl13 (68 aa).

Residues 1–66 enclose the LCN-type CS-alpha/beta domain; the sequence is KEGYLVDYHT…VWPLPNKRCK (66 aa). Disulfide bonds link C12/C65, C16/C41, C25/C46, and C29/C48. The residue at position 66 (K66) is a Lysine amide.

It belongs to the long (4 C-C) scorpion toxin superfamily. Sodium channel inhibitor family. Beta subfamily. Expressed by the venom gland.

It is found in the secreted. Beta toxins bind voltage-independently at site-4 of sodium channels (Nav) and shift the voltage of activation toward more negative potentials thereby affecting sodium channel activation and promoting spontaneous and repetitive firing. Inhibits sodium channels Nav1.4/SCN4A, Nav1.5/SCN5A and Nav1.6/SCN8A. Also has a weak inhibitory effect on Nav1.2/SCN2A. Is lethal to mice. The sequence is that of Beta-toxin Cl13 from Centruroides limpidus (Mexican scorpion).